Here is a 389-residue protein sequence, read N- to C-terminus: PqqA peptide cyclase (389 aa).

Positions 19–234 constitute a Radical SAM core domain; that stretch reads VGLPLWLLAE…TNEYRDQLAA (216 aa). The [4Fe-4S] cluster site is built by Cys33, Cys37, and Cys40.

This sequence belongs to the radical SAM superfamily. PqqE family. In terms of assembly, interacts with PqqD. The interaction is necessary for activity of PqqE. [4Fe-4S] cluster serves as cofactor.

It catalyses the reaction [PQQ precursor protein] + S-adenosyl-L-methionine = E-Y cross-linked-[PQQ precursor protein] + 5'-deoxyadenosine + L-methionine + H(+). It functions in the pathway cofactor biosynthesis; pyrroloquinoline quinone biosynthesis. In terms of biological role, catalyzes the cross-linking of a glutamate residue and a tyrosine residue in the PqqA protein as part of the biosynthesis of pyrroloquinoline quinone (PQQ). This is PqqA peptide cyclase from Pseudomonas syringae pv. tomato (strain ATCC BAA-871 / DC3000).